A 742-amino-acid polypeptide reads, in one-letter code: uncharacterized protein (742 aa).

The tract at residues 167-471 (GIVPPEPWGH…AAGAAGGGGA (305 aa)) is disordered. The segment covering 205-218 (PAPPPSLFAPPPPS) has biased composition (pro residues). Polar residues-rich tracts occupy residues 318–331 (SPAT…NAVS) and 358–368 (GSPQTLSTAPS). Residues 386–401 (TAGPAAPPTTGGPPAP) show a composition bias toward pro residues. Low complexity predominate over residues 421–432 (PLSGGVPGGAVP). Residues 433-447 (LGPPPTPPPAAPVTT) show a composition bias toward pro residues. The span at 448 to 464 (PPLASGAPVAPTGAAAG) shows a compositional bias: low complexity.

Functionally, may be involved in the ESX-1 / type VII specialized secretion system (T7SS), which exports several proteins including EsxA and EsxB. Involved in DNA conjugation in the recipient strain. This is an uncharacterized protein from Mycolicibacterium smegmatis (strain MKD8) (Mycobacterium smegmatis).